A 312-amino-acid polypeptide reads, in one-letter code: Protein atonal (312 aa).

Disordered regions lie at residues Ser136–Ala174 and Asn220–Ile248. Residues Pro162–Ala174 are compositionally biased toward low complexity. The bHLH domain maps to Lys255–Leu307.

Efficient DNA binding requires dimerization with another bHLH protein. Forms a heterodimer with Daughterless. As to expression, proneural clusters and sense organ precursors of the chordotonal organs, optic furrow of the eye-antennal disk and developing brain lobe.

It localises to the nucleus. Developmental protein involved in neurogenesis. Required for the formation of chordotonal organs and photoreceptors. Seems to bind to E boxes. Specifically required for the photoreceptor R8 selection. The chain is Protein atonal (ato) from Drosophila melanogaster (Fruit fly).